The following is a 143-amino-acid chain: Transcriptional regulator MraZ (143 aa).

SpoVT-AbrB domains follow at residues Thr-5–Glu-47 and Ala-76–Ser-119.

Belongs to the MraZ family. In terms of assembly, forms oligomers.

It localises to the cytoplasm. It is found in the nucleoid. This Micrococcus luteus (strain ATCC 4698 / DSM 20030 / JCM 1464 / CCM 169 / CCUG 5858 / IAM 1056 / NBRC 3333 / NCIMB 9278 / NCTC 2665 / VKM Ac-2230) (Micrococcus lysodeikticus) protein is Transcriptional regulator MraZ.